The primary structure comprises 77 residues: NAD(P)H-quinone oxidoreductase subunit L (77 aa).

2 helical membrane passes run 12–32 (FVAY…ILFY) and 47–67 (LGVY…SPFL).

Belongs to the complex I NdhL subunit family. As to quaternary structure, NDH-1 can be composed of about 15 different subunits; different subcomplexes with different compositions have been identified which probably have different functions.

It localises to the cellular thylakoid membrane. The catalysed reaction is a plastoquinone + NADH + (n+1) H(+)(in) = a plastoquinol + NAD(+) + n H(+)(out). It catalyses the reaction a plastoquinone + NADPH + (n+1) H(+)(in) = a plastoquinol + NADP(+) + n H(+)(out). In terms of biological role, NDH-1 shuttles electrons from an unknown electron donor, via FMN and iron-sulfur (Fe-S) centers, to quinones in the respiratory and/or the photosynthetic chain. The immediate electron acceptor for the enzyme in this species is believed to be plastoquinone. Couples the redox reaction to proton translocation, and thus conserves the redox energy in a proton gradient. Cyanobacterial NDH-1 also plays a role in inorganic carbon-concentration. In Prochlorococcus marinus (strain MIT 9515), this protein is NAD(P)H-quinone oxidoreductase subunit L.